Reading from the N-terminus, the 79-residue chain is D-alanyl carrier protein (79 aa).

A Carrier domain is found at 1–77 (MDIKSEVLKI…KIIEGITELR (77 aa)). Ser35 carries the post-translational modification O-(pantetheine 4'-phosphoryl)serine.

This sequence belongs to the DltC family. Post-translationally, 4'-phosphopantetheine is transferred from CoA to a specific serine of apo-DCP.

Its subcellular location is the cytoplasm. The protein operates within cell wall biogenesis; lipoteichoic acid biosynthesis. Functionally, carrier protein involved in the D-alanylation of lipoteichoic acid (LTA). The loading of thioester-linked D-alanine onto DltC is catalyzed by D-alanine--D-alanyl carrier protein ligase DltA. The DltC-carried D-alanyl group is further transferred to cell membrane phosphatidylglycerol (PG) by forming an ester bond, probably catalyzed by DltD. D-alanylation of LTA plays an important role in modulating the properties of the cell wall in Gram-positive bacteria, influencing the net charge of the cell wall. The chain is D-alanyl carrier protein from Streptococcus mutans serotype c (strain ATCC 700610 / UA159).